Here is a 201-residue protein sequence, read N- to C-terminus: Recombination protein RecR (201 aa).

Residues 57–72 form a C4-type zinc finger; that stretch reads CADCRTFTEQPVCTIC. Residues 81 to 176 enclose the Toprim domain; that stretch reads GQICVVESPA…MASRIAHGVP (96 aa).

This sequence belongs to the RecR family.

In terms of biological role, may play a role in DNA repair. It seems to be involved in an RecBC-independent recombinational process of DNA repair. It may act with RecF and RecO. This is Recombination protein RecR from Sodalis glossinidius (strain morsitans).